The following is a 364-amino-acid chain: MDQDRSGAADAGNPDPGRGPAGSAEARNGAAAASSPAEWAGQLRLSVAERNGRSYAARQFHEGALRVLRPHYLDRSGQVTYTVVNPGGAYLGADAYLLDVAVERDASLVLTTQSATKVYRTPQGPATQDMTVRLGPGSCLEHVPDQLIVYRGGSYLQRTRVDMDPAASLLLAEVVTPGWSPSGESFAYDELRLRTEVRVTPPEVPAPAAPDRGAPAAEAQDRPADPCHVPGGPDRAASSGGTGAAPAGERARRLVVDQLRIRPDAHGGMSGVGFMEGFSHTGQLLVADARLDDELYERLCELVDASGTHSGITRAGTGEPYGVRCVCVRSLAHSTSAITALHRAVVDELRQRWRGQSPLRLRKY.

Disordered stretches follow at residues 1-37 (MDQD…SSPA) and 201-250 (PPEV…AGER). Low complexity-rich tracts occupy residues 21-37 (AGSA…SSPA), 209-218 (APDRGAPAAE), and 236-248 (AASS…APAG).

The protein belongs to the UreD family. In terms of assembly, ureD, UreF and UreG form a complex that acts as a GTP-hydrolysis-dependent molecular chaperone, activating the urease apoprotein by helping to assemble the nickel containing metallocenter of UreC. The UreE protein probably delivers the nickel.

It localises to the cytoplasm. Functionally, required for maturation of urease via the functional incorporation of the urease nickel metallocenter. The protein is Urease accessory protein UreD of Kocuria rhizophila (strain ATCC 9341 / DSM 348 / NBRC 103217 / DC2201).